Here is a 219-residue protein sequence, read N- to C-terminus: MAETAPAAAPAAAPAPAAKAAAKKPKKAAGGAKARKPAGPSVTELITKAVSASKERKGLSLAALKKALAAGGYDVEKNNSRIKLGLKSLVSKGTLVQTKGTGASGSFRLSKKPGEGLEKAPKKKASAAKPKKAAAKKPAAAAKKPKKAVAVKKSPKKAKKPAASATKKSVKSPKKAAKPKKAVAAKSPAKAKAVKPKAAKPKAAKPKAAKAKKAAAKKK.

Composition is skewed to low complexity over residues 1-20 and 28-40; these read MAET…AAKA and AAGG…PAGP. Disordered stretches follow at residues 1 to 42 and 89 to 219; these read MAET…GPSV and LVSK…AKKK. The region spanning 38–111 is the H15 domain; that stretch reads AGPSVTELIT…GASGSFRLSK (74 aa). Composition is skewed to basic residues over residues 121-135, 143-160, 168-183, and 192-219; these read PKKK…KAAA, KKPK…KAKK, KSVK…KKAV, and KAVK…AKKK.

This sequence belongs to the histone H1/H5 family.

It is found in the nucleus. Its subcellular location is the chromosome. Its function is as follows. Histones H1 are necessary for the condensation of nucleosome chains into higher-order structures. This Gallus gallus (Chicken) protein is Histone H1.11R.